A 464-amino-acid polypeptide reads, in one-letter code: E3 ubiquitin-protein ligase TRAIP (464 aa).

The RING-type; atypical zinc finger occupies 7–50 (CTICSDFFDNARDVAAITCGHTFHQECLLQWFHSAPHRTCPQCR). 2 coiled-coil regions span residues 142–186 (LDKQ…MIRD) and 236–277 (AQKA…LQKT). Residues 439–464 (KRKKVSRPTACTSSLANQPRLEDFLK) form a disordered region. The PIP-box motif lies at 456-464 (QPRLEDFLK).

This sequence belongs to the TRAIP family.

Its subcellular location is the nucleus. It is found in the nucleoplasm. The protein localises to the nucleolus. It localises to the chromosome. The protein resides in the cytoplasm. It catalyses the reaction S-ubiquitinyl-[E2 ubiquitin-conjugating enzyme]-L-cysteine + [acceptor protein]-L-lysine = [E2 ubiquitin-conjugating enzyme]-L-cysteine + N(6)-ubiquitinyl-[acceptor protein]-L-lysine.. It participates in protein modification; protein ubiquitination. E3 ubiquitin ligase required to protect genome stability in response to replication stress. Acts as a key regulator of interstrand cross-link repair, which takes place when both strands of duplex DNA are covalently tethered together, thereby blocking replication and transcription. Controls the choice between the two pathways of replication-coupled interstrand-cross-link repair by mediating ubiquitination of mcm7 subunit of the CMG helicase complex. Short ubiquitin chains on mcm7 promote recruitment of DNA glycosylase neil3. If the interstrand cross-link cannot be cleaved by neil3, the ubiquitin chains continue to grow on mcm7, promoting the unloading of the CMG helicase complex by the vcp/p97 ATPase, enabling the Fanconi anemia DNA repair pathway. Only catalyzes ubiquitination of mcm7 when forks converge. Also involved in the repair of covalent DNA-protein cross-links (DPCs) during DNA synthesis: promotes ubiquitination of DPCs, leading to their degradation by the proteasome. Also acts as a negative regulator of innate immune signaling by inhibiting activation of NF-kappa-B mediated by TNF. This is E3 ubiquitin-protein ligase TRAIP from Xenopus laevis (African clawed frog).